We begin with the raw amino-acid sequence, 157 residues long: Phosphopantetheine adenylyltransferase (157 aa).

Ser-9 is a binding site for substrate. ATP contacts are provided by residues 9–10 and His-17; that span reads SF. Residues Lys-41, Leu-73, and Lys-87 each contribute to the substrate site. Residues 88 to 90, Glu-98, and 123 to 129 contribute to the ATP site; these read GLR and YSFLSSS.

It belongs to the bacterial CoaD family. In terms of assembly, homohexamer. The cofactor is Mg(2+).

The protein localises to the cytoplasm. The enzyme catalyses (R)-4'-phosphopantetheine + ATP + H(+) = 3'-dephospho-CoA + diphosphate. The protein operates within cofactor biosynthesis; coenzyme A biosynthesis; CoA from (R)-pantothenate: step 4/5. Its function is as follows. Reversibly transfers an adenylyl group from ATP to 4'-phosphopantetheine, yielding dephospho-CoA (dPCoA) and pyrophosphate. The protein is Phosphopantetheine adenylyltransferase of Alkaliphilus oremlandii (strain OhILAs) (Clostridium oremlandii (strain OhILAs)).